The following is a 213-amino-acid chain: Ribosomal RNA small subunit methyltransferase G (213 aa).

S-adenosyl-L-methionine contacts are provided by residues G72, F77, I125 to E126, and R141.

This sequence belongs to the methyltransferase superfamily. RNA methyltransferase RsmG family.

Its subcellular location is the cytoplasm. The enzyme catalyses guanosine(527) in 16S rRNA + S-adenosyl-L-methionine = N(7)-methylguanosine(527) in 16S rRNA + S-adenosyl-L-homocysteine. Specifically methylates the N7 position of guanine in position 527 of 16S rRNA. This Sinorhizobium medicae (strain WSM419) (Ensifer medicae) protein is Ribosomal RNA small subunit methyltransferase G.